Here is a 438-residue protein sequence, read N- to C-terminus: Transposon Ty2-LR1 Gag polyprotein (438 aa).

3 stretches are compositionally biased toward polar residues: residues 1–11, 19–39, and 49–60; these read MESQQLHQNPH, ASVT…SASN, and KVNSQQETTPGT. 3 disordered regions span residues 1-86, 364-397, and 419-438; these read MESQ…GQYQ, KNVS…AKAH, and SSQY…TERI. Residues 295 to 397 are RNA-binding; it reads ENNINVSDRL…SSKPRAAKAH (103 aa). Low complexity predominate over residues 369 to 381; that stretch reads TSPNTTNTKVTTR.

In terms of assembly, homotrimer.

It is found in the cytoplasm. Capsid protein (CA) is the structural component of the virus-like particle (VLP), forming the shell that encapsulates the retrotransposons dimeric RNA genome. The particles are assembled from trimer-clustered units and there are holes in the capsid shells that allow for the diffusion of macromolecules. CA also has nucleocapsid-like chaperone activity, promoting primer tRNA(i)-Met annealing to the multipartite primer-binding site (PBS), dimerization of Ty2 RNA and initiation of reverse transcription. In Saccharomyces cerevisiae (strain ATCC 204508 / S288c) (Baker's yeast), this protein is Transposon Ty2-LR1 Gag polyprotein (TY2A-LR1).